Consider the following 143-residue polypeptide: Putative glycerol transporter Lin0368 (143 aa).

A run of 4 helical transmembrane segments spans residues 6–26 (GMIG…PLAE), 27–47 (NYGI…MWFM), 60–80 (AAFV…DVFM), and 90–110 (LPTI…AAAI). The segment at 118-143 (HEAKQEKTEPGMNIKEEERLNENQLV) is disordered.

Its subcellular location is the membrane. Its function is as follows. Could be involved in the glycerol uptake either via facilitated diffusion or active transport. This Listeria innocua serovar 6a (strain ATCC BAA-680 / CLIP 11262) protein is Putative glycerol transporter Lin0368.